A 104-amino-acid chain; its full sequence is Large ribosomal subunit protein bL21 (104 aa).

The protein belongs to the bacterial ribosomal protein bL21 family. Part of the 50S ribosomal subunit. Contacts protein L20.

This protein binds to 23S rRNA in the presence of protein L20. This Streptococcus thermophilus (strain ATCC BAA-491 / LMD-9) protein is Large ribosomal subunit protein bL21.